A 519-amino-acid chain; its full sequence is Arabinose import ATP-binding protein AraG 2 (519 aa).

ABC transporter domains lie at 29 to 264 (LSLD…MVGR) and 264 to 515 (RSIE…LIKL). ATP is bound at residue 61–68 (GENGAGKS).

The protein belongs to the ABC transporter superfamily. Arabinose importer (TC 3.A.1.2.2) family. In terms of assembly, the complex is composed of two ATP-binding proteins (AraG), two transmembrane proteins (AraH) and a solute-binding protein (AraF).

Its subcellular location is the cell inner membrane. The enzyme catalyses L-arabinose(out) + ATP + H2O = L-arabinose(in) + ADP + phosphate + H(+). Part of the ABC transporter complex AraFGH involved in arabinose import. Responsible for energy coupling to the transport system. This Burkholderia ambifaria (strain ATCC BAA-244 / DSM 16087 / CCUG 44356 / LMG 19182 / AMMD) (Burkholderia cepacia (strain AMMD)) protein is Arabinose import ATP-binding protein AraG 2.